The primary structure comprises 207 residues: Succinyl-CoA:3-ketoacid coenzyme A transferase subunit B (207 aa).

Residue E43 is part of the active site.

The protein belongs to the 3-oxoacid CoA-transferase subunit B family. As to quaternary structure, heterodimer of a subunit A and a subunit B.

It carries out the reaction a 3-oxo acid + succinyl-CoA = a 3-oxoacyl-CoA + succinate. The protein is Succinyl-CoA:3-ketoacid coenzyme A transferase subunit B (scoB) of Helicobacter pylori (strain J99 / ATCC 700824) (Campylobacter pylori J99).